Here is a 754-residue protein sequence, read N- to C-terminus: ToMV resistance protein Tm-1(GCR237) (754 aa).

The segment at 1–201 is N-terminal inhibitory domain NN; the sequence is MATAQSNSPR…AGMVIGRLES (201 aa). Residues 18–20, threonine 55, arginine 92, and 124–127 contribute to the ATP site; these read DTK and GSGG. The N-terminal inhibitory domain NC stretch occupies residues 211–431; that stretch reads KFTVGVTMFG…VDSFLEISPK (221 aa).

It belongs to the UPF0261 family. In terms of assembly, homodimer. As to quaternary structure, (Microbial infection) Binds, via an ATP bridge, to the tobamoviruses avirulent (Avr) replication proteins (large and small subunits, e.g. tomato mosaic virus (ToMV/TMV) AC P03587, tobacco mild green mosaic virus (TMGMV) AC P18339 and pepper mild mottle virus (PMMoV) AC P89657) to inhibit their function after the translation of tobamoviruses RNA, but before the viral replication complex formation on the membrane surfaces; this interaction is not possible with resistance-breaking strains replication proteins.

Functionally, inhibitor of viral RNA replication which confers resistance to some tobamoviruses including tomato mosaic virus (ToMV) (e.g. isolate L), tobacco mosaic virus (TMV), tobacco mild green mosaic virus (TMGMV) and pepper mild mottle virus (PMMoV), but not to resistance-breaking isolates of ToMV (e.g. LT1, SL-1 and ToMV1-2) and tomato brown rugose fruit virus (ToBRFV). Prevents tobamoviruses RNA replication by affecting the association of tobamoviruses replication proteins (large and small subunits) with host membrane-associated proteins (e.g. TOM1, TOM2A and ARL8), thus inhibiting the replication complex formation on the membranes and avoiding viral negative-strand RNA synthesis. Inhibits triphosphatase activity of ToMV replication proteins. This Solanum lycopersicum (Tomato) protein is ToMV resistance protein Tm-1(GCR237).